A 606-amino-acid chain; its full sequence is Sulfite reductase [NADPH] flavoprotein alpha-component (606 aa).

The 139-residue stretch at 68 to 206 (ITILSASQTG…AAEAWRKEVT (139 aa)) folds into the Flavodoxin-like domain. FMN-binding positions include 74 to 79 (SQTGNA), 121 to 124 (STQG), and 157 to 166 (LGDITYEHFA). The 215-residue stretch at 240 to 454 (ESPLTATLSV…VEHNDNFRLP (215 aa)) folds into the FAD-binding FR-type domain. FAD contacts are provided by residues Thr328, Gln362, 392–395 (RLYS), 410–412 (TVG), Tyr416, and 425–428 (GGAS). Residues 525-526 (SR), 531-535 (KVYVQ), and Asp568 each bind NADP(+). Tyr606 lines the FAD pocket.

Belongs to the NADPH-dependent sulphite reductase flavoprotein subunit CysJ family. This sequence in the N-terminal section; belongs to the flavodoxin family. The protein in the C-terminal section; belongs to the flavoprotein pyridine nucleotide cytochrome reductase family. In terms of assembly, alpha(8)-beta(8). The alpha component is a flavoprotein, the beta component is a hemoprotein. FAD is required as a cofactor. It depends on FMN as a cofactor.

The catalysed reaction is hydrogen sulfide + 3 NADP(+) + 3 H2O = sulfite + 3 NADPH + 4 H(+). The protein operates within sulfur metabolism; hydrogen sulfide biosynthesis; hydrogen sulfide from sulfite (NADPH route): step 1/1. Its function is as follows. Component of the sulfite reductase complex that catalyzes the 6-electron reduction of sulfite to sulfide. This is one of several activities required for the biosynthesis of L-cysteine from sulfate. The flavoprotein component catalyzes the electron flow from NADPH -&gt; FAD -&gt; FMN to the hemoprotein component. This chain is Sulfite reductase [NADPH] flavoprotein alpha-component, found in Zymomonas mobilis subsp. mobilis (strain ATCC 31821 / ZM4 / CP4).